A 105-amino-acid chain; its full sequence is Pyrimidine/purine nucleoside phosphorylase (105 aa).

It belongs to the nucleoside phosphorylase PpnP family.

It carries out the reaction a purine D-ribonucleoside + phosphate = a purine nucleobase + alpha-D-ribose 1-phosphate. The enzyme catalyses adenosine + phosphate = alpha-D-ribose 1-phosphate + adenine. The catalysed reaction is cytidine + phosphate = cytosine + alpha-D-ribose 1-phosphate. It catalyses the reaction guanosine + phosphate = alpha-D-ribose 1-phosphate + guanine. It carries out the reaction inosine + phosphate = alpha-D-ribose 1-phosphate + hypoxanthine. The enzyme catalyses thymidine + phosphate = 2-deoxy-alpha-D-ribose 1-phosphate + thymine. The catalysed reaction is uridine + phosphate = alpha-D-ribose 1-phosphate + uracil. It catalyses the reaction xanthosine + phosphate = alpha-D-ribose 1-phosphate + xanthine. Functionally, catalyzes the phosphorolysis of diverse nucleosides, yielding D-ribose 1-phosphate and the respective free bases. Can use uridine, adenosine, guanosine, cytidine, thymidine, inosine and xanthosine as substrates. Also catalyzes the reverse reactions. This chain is Pyrimidine/purine nucleoside phosphorylase, found in Cupriavidus pinatubonensis (strain JMP 134 / LMG 1197) (Cupriavidus necator (strain JMP 134)).